The primary structure comprises 151 residues: Deoxyuridine 5'-triphosphate nucleotidohydrolase (151 aa).

Substrate-binding positions include 70–72 (RSG), asparagine 83, 87–89 (LID), and methionine 97.

This sequence belongs to the dUTPase family. The cofactor is Mg(2+).

The catalysed reaction is dUTP + H2O = dUMP + diphosphate + H(+). It functions in the pathway pyrimidine metabolism; dUMP biosynthesis; dUMP from dCTP (dUTP route): step 2/2. In terms of biological role, this enzyme is involved in nucleotide metabolism: it produces dUMP, the immediate precursor of thymidine nucleotides and it decreases the intracellular concentration of dUTP so that uracil cannot be incorporated into DNA. The sequence is that of Deoxyuridine 5'-triphosphate nucleotidohydrolase from Stutzerimonas stutzeri (strain A1501) (Pseudomonas stutzeri).